The chain runs to 405 residues: Lipase lipl-1 (405 aa).

Residues Met-1 to Gly-20 form the signal peptide. N-linked (GlcNAc...) asparagine glycosylation occurs at Asn-66. Residue Ser-169 is the Nucleophile of the active site. Asn-273 carries an N-linked (GlcNAc...) asparagine glycan. Active-site charge relay system residues include Asp-344 and His-376.

The protein belongs to the AB hydrolase superfamily. Lipase family.

The protein localises to the secreted. It localises to the lysosome lumen. Lipase that, together with lipl-3, plays a role in the response to nutrient deprivation by controlling lipid metabolism. Specifically, involved in the breakdown of lipids during lipophagy, a process during which lipids contained in lipid droplets that have been delivered to lysosomes by autophagy are degraded. This chain is Lipase lipl-1, found in Caenorhabditis elegans.